The primary structure comprises 276 residues: NH(3)-dependent NAD(+) synthetase (276 aa).

Glycine 43 to serine 50 serves as a coordination point for ATP. Aspartate 49 provides a ligand contact to Mg(2+). Arginine 146 is a binding site for deamido-NAD(+). Residue threonine 166 coordinates ATP. A Mg(2+)-binding site is contributed by glutamate 171. Deamido-NAD(+) is bound by residues lysine 179 and aspartate 186. The ATP site is built by lysine 195 and threonine 217. Histidine 266–lysine 267 is a binding site for deamido-NAD(+).

This sequence belongs to the NAD synthetase family. In terms of assembly, homodimer.

The catalysed reaction is deamido-NAD(+) + NH4(+) + ATP = AMP + diphosphate + NAD(+) + H(+). It functions in the pathway cofactor biosynthesis; NAD(+) biosynthesis; NAD(+) from deamido-NAD(+) (ammonia route): step 1/1. Functionally, catalyzes the ATP-dependent amidation of deamido-NAD to form NAD. Uses ammonia as a nitrogen source. The protein is NH(3)-dependent NAD(+) synthetase of Vibrio vulnificus (strain YJ016).